Consider the following 246-residue polypeptide: UDP-N-acetyl-D-mannosaminuronic acid transferase (246 aa).

This sequence belongs to the glycosyltransferase 26 family.

The catalysed reaction is UDP-N-acetyl-alpha-D-mannosaminouronate + N-acetyl-alpha-D-glucosaminyl-di-trans,octa-cis-undecaprenyl diphosphate = beta-D-ManNAcA-(1-&gt;4)-alpha-D-GlcNAc-di-trans,octa-cis-undecaprenyl diphosphate + UDP + H(+). It participates in bacterial outer membrane biogenesis; enterobacterial common antigen biosynthesis. Functionally, catalyzes the synthesis of Und-PP-GlcNAc-ManNAcA (Lipid II), the second lipid-linked intermediate involved in enterobacterial common antigen (ECA) synthesis. This is UDP-N-acetyl-D-mannosaminuronic acid transferase from Escherichia coli (strain K12).